Here is a 316-residue protein sequence, read N- to C-terminus: Epoxide hydrolase 3 (316 aa).

One can recognise an AB hydrolase-1 domain in the interval 25 to 302 (PVVLLLHGFP…ACHFINQERP (278 aa)). D101 acts as the Nucleophile in catalysis. An epoxide is bound at residue Y150. The active-site Proton donor is Y230. H295 serves as the catalytic Proton acceptor.

The protein belongs to the AB hydrolase superfamily. Epoxide hydrolase family. In terms of assembly, homodimer. In terms of tissue distribution, highly expressed in young fruits 15 days after anthesis (15-DAA).

It catalyses the reaction an epoxide + H2O = an ethanediol. The enzyme catalyses (24S)-24,25-epoxycucurbitadienol + H2O = (24R)-24,25-dihydroxycucurbitadienol. It functions in the pathway secondary metabolite biosynthesis; terpenoid biosynthesis. Epoxide hydrolase involved in the biosynthesis of cucurbitacin and mogroside tetracyclic triterpene natural products (e.g. siamenoside I and mogrosides IV, V and VI). Cucurbitacins have cytotoxic properties and exhibit deterrent taste as a defense barrier against herbivores. Mogrosides are nonsugar highly oxygenated compounds used as high-intensity zero-calorie sweeteners; they also possess pharmacological properties such as regulating immunity, lowering blood sugar and lipid levels, protecting the liver, and acting as antioxidants and antitumor agents. Catalyzes the hydrolysis of aromatic epoxide-containing substrates, such as the conversion of 24,25-epoxycucurbitadienol to 24,25-dihydroxycucurbitadienol. This is Epoxide hydrolase 3 from Siraitia grosvenorii (Monk's fruit).